Consider the following 2892-residue polypeptide: E3 ubiquitin-protein ligase lubel (2892 aa).

8 disordered regions span residues 23-55 (DRIG…KSTP), 125-252 (KQHM…QLEK), 395-423 (SQQH…QFGS), 483-631 (PSAA…ESEG), 644-672 (QKLQ…ENTQ), 685-737 (AHEE…PDHE), 757-865 (CCKT…DNSL), and 949-975 (DRFT…QQES). The span at 40–52 (GLPKAPALPPKAK) shows a compositional bias: low complexity. Residues 189–198 (GWRGSLGGGA) show a composition bias toward gly residues. Polar residues predominate over residues 206-215 (ATSSANQMNN). 2 stretches are compositionally biased toward low complexity: residues 402-412 (AQHPHQALPQH) and 483-503 (PSAA…TPSR). A compositionally biased stretch (acidic residues) spans 516–528 (VDDELTDDEDSDQ). Residues 535 to 546 (VSNRSGMTSASR) show a composition bias toward polar residues. Over residues 547 to 560 (SQHHQNHIQPRQRR) the composition is skewed to basic residues. The segment covering 606 to 623 (GTLTRNKTATDSARTSRI) has biased composition (polar residues). Positions 647 to 670 (QEADQHKSSKKAEPKRKPEMKDEN) are enriched in basic and acidic residues. Residues 801-813 (KPTTKSQQPSQKS) show a composition bias toward polar residues. Composition is skewed to low complexity over residues 818–837 (SKTT…AVNS) and 846–856 (KTPSKSTLKTS). Residues 1042–1187 (MHIILKELEL…LMRIWGSPNG (146 aa)) enclose the UBA-like 1 domain. 7 disordered regions span residues 1214 to 1252 (LQPP…SPYQ), 1477 to 1520 (LPTA…KLET), 1557 to 1653 (AEVQ…KILS), 1717 to 2019 (STTI…NLSE), 2032 to 2082 (RDEI…EGNT), 2191 to 2316 (SAPP…PLRS), and 2411 to 2431 (DYET…EPQK). Residues 1241–1252 (VKSTYATPSPYQ) are compositionally biased toward polar residues. Positions 1510-1519 (EELRQQEKLE) are enriched in basic and acidic residues. A compositionally biased stretch (polar residues) spans 1560 to 1571 (QVQSDDQPSTSR). Over residues 1576–1587 (RAKRSQQSRKGR) the composition is skewed to basic residues. A compositionally biased stretch (polar residues) spans 1595–1607 (PTNRTKLPNNIDQ). Over residues 1608–1627 (KVNESKTAAKETEAVKDKDL) the composition is skewed to basic and acidic residues. Composition is skewed to polar residues over residues 1630 to 1653 (AASN…KILS), 1717 to 1726 (STTISEQSEG), and 1764 to 1779 (KSPT…TSHI). Low complexity predominate over residues 1822–1834 (LSSSSLRSESRSS). The span at 1859-1881 (TVSSPKSEQLSDNQEVNLVSQET) shows a compositional bias: polar residues. Positions 1918 to 1927 (DSDEVFEDAP) are enriched in acidic residues. Residues 1953–1963 (DGQRAETKSPE) show a composition bias toward basic and acidic residues. 2 stretches are compositionally biased toward acidic residues: residues 1964–1975 (DEVVILLDEESQ) and 2036–2079 (SMDE…DGEE). Low complexity-rich tracts occupy residues 2214 to 2230 (PSEV…ALPI) and 2269 to 2291 (SGTA…TVSK). The span at 2297–2308 (NEPTNKSNSTPL) shows a compositional bias: polar residues. The span at 2411 to 2425 (DYETSATEEEQEEPN) shows a compositional bias: acidic residues. The 57-residue stretch at 2457–2513 (DPAILARKYVDQELVTNIAEAQIAATLVSMKFSEDVALWAARECSDLDQAIAMLQQE) folds into the UBA-like 2 domain. Residues 2510–2748 (LQQECELCMN…LGLHAHHPRN (239 aa)) are TRIAD supradomain. The Zn(2+) site is built by Cys-2514, Cys-2517, Cys-2537, Cys-2540, Cys-2618, Cys-2621, Cys-2636, Cys-2639, Cys-2644, Cys-2647, His-2655, Cys-2660, Cys-2690, and Cys-2693. The segment at 2514–2564 (CELCMNSYPMNQMVSMLKCLHKCCKQCAKSYFTVQITDRSINDCSCPFCKL) adopts an RING-type 1 zinc-finger fold. The necessary for linear polyubiquitination and sufficent for inducing DptA in the intestine stretch occupies residues 2514–2892 (CELCMNSYPM…IKKHIPLKSA (379 aa)). The IBR-type zinc-finger motif lies at 2601–2660 (QRKLRDRSLLQDPNFKWCIQCSSGFFARPKQKRLICPDCGSVTCAQCRKPWERQHEGSSC). The RING-type 2; atypical zinc finger occupies 2690-2720 (CPKCKFRYSLARGGCMHFTCTQCKFEFCYGC). Cys-2704 is a catalytic residue. 2 residues coordinate Zn(2+): Cys-2709 and Cys-2712.

The protein belongs to the RBR family.

It carries out the reaction [E2 ubiquitin-conjugating enzyme]-S-ubiquitinyl-L-cysteine + [acceptor protein]-L-lysine = [E2 ubiquitin-conjugating enzyme]-L-cysteine + [acceptor protein]-N(6)-ubiquitinyl-L-lysine.. In terms of biological role, E3 ubiquitin-protein ligase which conjugates linear 'Met-1'- and 'Lys-63'-linked polyubiquitin chains to substrates and plays a crucial role in the NF-kappa-B intestinal inflammatory response to oral infection and in the heat stress response. Preferentially interacts with 'Lys-63'-linked, and to a lesser extent 'Lys-48'-linked, polyubiquitin chains. Upon oral infection with a Gram-negative bacterium E.carotovora subsp. carotovora 15, functions with the E2 ubiquitin-conjugating enzyme Ubc10 to mediate the conjugation of 'Lys-63'- and linear 'Met-1'-linked polyubiquitin chains to the substrate key which is essential for activation of the NF-kappa-B signaling cascade in the adult intestinal epithelium. It is not required for systemic immune response to septic infection with either E.carotovora subsp. carotovora 15 or Gram-positive M.luteus bacteria. Function in controlling linear ubiquitination is also essential for regulating the heat stress response in adults. This function may require the E2 ubiquitin-conjugating enzymes Ubc10 or eff. The chain is E3 ubiquitin-protein ligase lubel from Drosophila melanogaster (Fruit fly).